Consider the following 557-residue polypeptide: MLRSDAVTKGIQRSPNRAMLRAVGFGDEDFGKPILGIANGYSTITPCNVGLNDLSRRAEEAARQAGGMPQMFGTITVSDGISMGTEGMKYSLVSREVIADAIETACNGQSMDGVLAVGGCDKNMPGAMLAMARMNIPAVFVYGGTIKPGKLGGCDLTVVSAFEAVGQLTSGNIDEDQLTAVEKNACPGAGSCGGMFTANTMSAAIETMGLSLPYSSTMAAEDEEKADNAARSAEVLLDAVKANIRPLDLLTNDAFENAISVIMAVGGSTNAVLHLLAIARTAGVSLSIDDFERIRQRVPVICDLKPSGRYVTVDLHNAGGIPQVMRLLLDAGLLHGDCRTVEGKSLREVLADVPSVPPADQDVIRPLSNPLYGKGHLAILKGNLASEGSVAKISGVKTPVLTGPARVFESEEDCLAAILDQRIKAGDVVVVRNEGPVGGPGMREMLAPTSAIVGQGLGDRVALITDGRFSGGTYGLVVGHVAPEAAVGGTIGLVQGGDSITVDADQLLLQLNVDEAELTRRRAAWSKPEPRYRTGILGKYARLVSSSSRGAVTDQPD.

[2Fe-2S] cluster is bound at residue Cys47. Asp79 contacts Mg(2+). [2Fe-2S] cluster is bound at residue Cys120. Mg(2+) is bound by residues Asp121 and Lys122. Position 122 is an N6-carboxylysine (Lys122). Cys192 lines the [2Fe-2S] cluster pocket. Glu444 serves as a coordination point for Mg(2+). The active-site Proton acceptor is Ser470.

It belongs to the IlvD/Edd family. In terms of assembly, homodimer. The cofactor is [2Fe-2S] cluster. Mg(2+) serves as cofactor.

The catalysed reaction is (2R)-2,3-dihydroxy-3-methylbutanoate = 3-methyl-2-oxobutanoate + H2O. The enzyme catalyses (2R,3R)-2,3-dihydroxy-3-methylpentanoate = (S)-3-methyl-2-oxopentanoate + H2O. It participates in amino-acid biosynthesis; L-isoleucine biosynthesis; L-isoleucine from 2-oxobutanoate: step 3/4. It functions in the pathway amino-acid biosynthesis; L-valine biosynthesis; L-valine from pyruvate: step 3/4. In terms of biological role, functions in the biosynthesis of branched-chain amino acids. Catalyzes the dehydration of (2R,3R)-2,3-dihydroxy-3-methylpentanoate (2,3-dihydroxy-3-methylvalerate) into 2-oxo-3-methylpentanoate (2-oxo-3-methylvalerate) and of (2R)-2,3-dihydroxy-3-methylbutanoate (2,3-dihydroxyisovalerate) into 2-oxo-3-methylbutanoate (2-oxoisovalerate), the penultimate precursor to L-isoleucine and L-valine, respectively. In Parasynechococcus marenigrum (strain WH8102), this protein is Dihydroxy-acid dehydratase.